A 180-amino-acid polypeptide reads, in one-letter code: ATP synthase subunit delta (180 aa).

It belongs to the ATPase delta chain family. F-type ATPases have 2 components, F(1) - the catalytic core - and F(0) - the membrane proton channel. F(1) has five subunits: alpha(3), beta(3), gamma(1), delta(1), epsilon(1). CF(0) has four main subunits: a(1), b(1), b'(1) and c(10-14). The alpha and beta chains form an alternating ring which encloses part of the gamma chain. F(1) is attached to F(0) by a central stalk formed by the gamma and epsilon chains, while a peripheral stalk is formed by the delta, b and b' chains.

The protein localises to the cellular thylakoid membrane. In terms of biological role, f(1)F(0) ATP synthase produces ATP from ADP in the presence of a proton or sodium gradient. F-type ATPases consist of two structural domains, F(1) containing the extramembraneous catalytic core and F(0) containing the membrane proton channel, linked together by a central stalk and a peripheral stalk. During catalysis, ATP synthesis in the catalytic domain of F(1) is coupled via a rotary mechanism of the central stalk subunits to proton translocation. Functionally, this protein is part of the stalk that links CF(0) to CF(1). It either transmits conformational changes from CF(0) to CF(1) or is implicated in proton conduction. This chain is ATP synthase subunit delta, found in Prochlorococcus marinus (strain MIT 9215).